We begin with the raw amino-acid sequence, 256 residues long: 5-keto-4-deoxy-D-glucarate aldolase (256 aa).

The active-site Proton acceptor is the His-50. Gln-151 contacts substrate. Glu-153 contributes to the Mg(2+) binding site. Residues Ser-178 and Asp-179 each contribute to the substrate site. Residue Asp-179 coordinates Mg(2+).

Belongs to the HpcH/HpaI aldolase family. KDGluc aldolase subfamily. In terms of assembly, homohexamer; trimer of dimers. Mg(2+) is required as a cofactor.

The catalysed reaction is 5-dehydro-4-deoxy-D-glucarate = 2-hydroxy-3-oxopropanoate + pyruvate. It catalyses the reaction 2-dehydro-3-deoxy-D-glucarate = 2-hydroxy-3-oxopropanoate + pyruvate. It functions in the pathway carbohydrate acid metabolism; galactarate degradation; D-glycerate from galactarate: step 2/3. In terms of biological role, catalyzes the reversible retro-aldol cleavage of both 5-keto-4-deoxy-D-glucarate and 2-keto-3-deoxy-D-glucarate to pyruvate and tartronic semialdehyde. The chain is 5-keto-4-deoxy-D-glucarate aldolase from Salmonella paratyphi C (strain RKS4594).